We begin with the raw amino-acid sequence, 218 residues long: uncharacterized protein (218 aa).

Transmembrane regions (helical) follow at residues 19–39 (VFGFSEFSIIGFITAVIFTII), 92–112 (FDYALFLTLVGIANIGIVSAV), 124–144 (YGLIAMIATLPLFGSAGMILA), 161–181 (LLFEKIIFAAGMAGETGIAPF), and 196–216 (YILMIHLSSLLLIVRTVEILL).

The protein resides in the cell membrane. This is an uncharacterized protein from Methanocaldococcus jannaschii (strain ATCC 43067 / DSM 2661 / JAL-1 / JCM 10045 / NBRC 100440) (Methanococcus jannaschii).